The chain runs to 134 residues: Profilin-4 (134 aa).

Cys13 and Cys118 form a disulfide bridge. The Involved in PIP2 interaction motif lies at 84–100; that stretch reads AVIRGKKGSGGITIKKT. Position 114 is a phosphothreonine (Thr114).

It belongs to the profilin family. In terms of assembly, occurs in many kinds of cells as a complex with monomeric actin in a 1:1 ratio. Post-translationally, phosphorylated by MAP kinases.

It localises to the cytoplasm. It is found in the cytoskeleton. In terms of biological role, binds to actin and affects the structure of the cytoskeleton. At high concentrations, profilin prevents the polymerization of actin, whereas it enhances it at low concentrations. This is Profilin-4 from Olea europaea (Common olive).